The sequence spans 222 residues: UPF0758 protein Lcho_0695 (222 aa).

Residues 100 to 222 (VFDSPQAVRD…VVSFAERGLL (123 aa)) form the MPN domain. 3 residues coordinate Zn(2+): H171, H173, and D184. The JAMM motif signature appears at 171-184 (HNHPSGVAEPSRAD).

It belongs to the UPF0758 family.

In Leptothrix cholodnii (strain ATCC 51168 / LMG 8142 / SP-6) (Leptothrix discophora (strain SP-6)), this protein is UPF0758 protein Lcho_0695.